A 433-amino-acid chain; its full sequence is Chitinase-like protein EN03 (433 aa).

Residues 1–16 (MKLFIALVGLLALAKA) form the signal peptide. Residues 23–433 (SKVLCYYDSR…PILRAAKYRL (411 aa)) enclose the GH18 domain. Residues Cys-27 and Cys-54 are joined by a disulfide bond. The N-linked (GlcNAc...) asparagine glycan is linked to Asn-220. The cysteines at positions 337 and 418 are disulfide-linked.

It belongs to the glycosyl hydrolase 18 family. IDGF subfamily.

The protein resides in the secreted. This chain is Chitinase-like protein EN03, found in Bombyx mori (Silk moth).